Reading from the N-terminus, the 1506-residue chain is Transcriptional repressor NF-X1 homolog (1506 aa).

The segment covering methionine 1–glutamine 12 has biased composition (polar residues). Disordered regions lie at residues methionine 1–leucine 123, leucine 142–threonine 164, and lysine 181–isoleucine 282. Low complexity-rich tracts occupy residues threonine 13–asparagine 103 and histidine 110–asparagine 121. Positions asparagine 194–asparagine 209 are enriched in low complexity. A compositionally biased stretch (basic and acidic residues) spans aspartate 217–glutamate 232. Over residues proline 240–glutamine 252 the composition is skewed to pro residues. The span at proline 253–glutamine 263 shows a compositional bias: low complexity. The span at glutamate 267–isoleucine 282 shows a compositional bias: basic and acidic residues. The PHD-type zinc-finger motif lies at isoleucine 363–asparagine 416. The segment at cysteine 366–arginine 414 adopts an RING-type; degenerate zinc-finger fold. 7 NF-X1-type zinc fingers span residues cysteine 460–serine 478, cysteine 515–valine 534, cysteine 581–leucine 600, cysteine 642–valine 661, cysteine 739–isoleucine 758, cysteine 796–tyrosine 817, and cysteine 852–isoleucine 868. 2 disordered regions span residues glutamine 897–asparagine 1012 and asparagine 1021–glutamate 1040. The segment covering threonine 903 to lysine 921 has biased composition (low complexity). Over residues lysine 925 to asparagine 934 the composition is skewed to acidic residues. A compositionally biased stretch (low complexity) spans asparagine 935–asparagine 980. 2 stretches are compositionally biased toward basic and acidic residues: residues glutamate 981–aspartate 1002 and asparagine 1021–glutamate 1031. An NF-X1-type 8 zinc finger spans residues cysteine 1062–glutamine 1084. Disordered regions lie at residues serine 1132–threonine 1167 and asparagine 1447–threonine 1473. Composition is skewed to low complexity over residues asparagine 1137–threonine 1167 and asparagine 1447–isoleucine 1470.

Belongs to the NFX1 family.

Its subcellular location is the nucleus. May play a role in transcription regulation. The polypeptide is Transcriptional repressor NF-X1 homolog (nfx1) (Dictyostelium discoideum (Social amoeba)).